Reading from the N-terminus, the 324-residue chain is O-ureido-L-serine synthase (324 aa).

Lysine 43 carries the post-translational modification N6-(pyridoxal phosphate)lysine. Pyridoxal 5'-phosphate-binding positions include asparagine 73, 177–181 (GTTGT), and serine 265.

The protein belongs to the cysteine synthase/cystathionine beta-synthase family. Homotetramer. The cofactor is pyridoxal 5'-phosphate.

The enzyme catalyses hydroxyurea + O-acetyl-L-serine = O-ureido-L-serine + acetate + H(+). The catalysed reaction is O-acetyl-L-serine + hydrogen sulfide = L-cysteine + acetate. Functionally, involved in the biosynthesis of the antibiotic D-cycloserine (DCS), a cyclic structural analog of D-alanine, used as an antitubercular agent. Catalyzes the addition of hydroxyurea on O-acetyl-L-serine (OAS) to yield O-ureido-L-serine. It prefers sulfide as the second substrate, followed by hydroxyurea, L-homocysteine, and thiosulfate. This Streptomyces lavendulae protein is O-ureido-L-serine synthase.